A 159-amino-acid chain; its full sequence is MRRRVFSSQDWRASGWDGMGFFSRRTFCGRSGRSCRGQLVQVSRPEVSAGSLLLPAPQAEDHSSRILYPRPKSLLPKMMNADMDAVDAENQVELEEKTRLINQVLELQHTLEDLSARVDAVKEENLKLKSENQVLGQYIENLMSASSVFQTTDTKSKRK.

Residues 78–146 adopt a coiled-coil conformation; sequence MMNADMDAVD…QYIENLMSAS (69 aa).

Belongs to the SCOC family. As to quaternary structure, homodimer. Interacts with ARL1, ARL2 and ARL3. Directly interacts with FEZ1 and UVRAG. The interaction with UVRAG is reduced by amino acid starvation, but the complex is stabilized in the presence of FEZ1. Interacts with NRBF2. As to expression, widely expressed with highest levels in brain, heart and skeletal muscle.

It is found in the golgi apparatus membrane. Its subcellular location is the golgi apparatus. The protein localises to the trans-Golgi network. It localises to the cytoplasm. The protein resides in the cytosol. Its function is as follows. Positive regulator of amino acid starvation-induced autophagy. The protein is Short coiled-coil protein (SCOC) of Homo sapiens (Human).